The primary structure comprises 154 residues: Large ribosomal subunit protein uL13 (154 aa).

It belongs to the universal ribosomal protein uL13 family. As to quaternary structure, part of the 50S ribosomal subunit.

This protein is one of the early assembly proteins of the 50S ribosomal subunit, although it is not seen to bind rRNA by itself. It is important during the early stages of 50S assembly. The sequence is that of Large ribosomal subunit protein uL13 from Bradyrhizobium diazoefficiens (strain JCM 10833 / BCRC 13528 / IAM 13628 / NBRC 14792 / USDA 110).